Consider the following 225-residue polypeptide: Fibroblast growth factor 11 (225 aa).

Positions 1 to 28 (MAALASSLIRQKREVREPGGSRPVSAQR) are disordered.

The protein belongs to the heparin-binding growth factors family. Brain and eye, and in a segmental pattern of the embryonic body wall. In adult olfactory bulb, hippocampus and most concentrated in Purkinje cell layer of the cerebellum.

The protein localises to the nucleus. Its function is as follows. Probably involved in nervous system development and function. This Mus musculus (Mouse) protein is Fibroblast growth factor 11 (Fgf11).